The sequence spans 395 residues: Sensor protein DltS (395 aa).

Helical transmembrane passes span 9 to 29 and 136 to 156; these read FVFL…AVSN and FLIL…SLYL. One can recognise a Histidine kinase domain in the interval 177 to 387; that stretch reads DASHELKTPI…RLEVQLPIDG (211 aa). His180 is subject to Phosphohistidine; by autocatalysis.

Its subcellular location is the cell membrane. It carries out the reaction ATP + protein L-histidine = ADP + protein N-phospho-L-histidine.. Member of the two-component regulatory system DltS/DltR. Regulates the expression of the dlt operon. Probably phosphorylates DltR. The sequence is that of Sensor protein DltS (dltS) from Streptococcus agalactiae serotype III (strain NEM316).